The following is a 234-amino-acid chain: Uridylate kinase (234 aa).

9–12 (KLSG) lines the ATP pocket. Glycine 51 is a UMP binding site. The ATP site is built by glycine 52 and arginine 56. UMP is bound by residues aspartate 71 and 132–139 (CGNPFFTT). Residues threonine 159, tyrosine 165, and aspartate 168 each contribute to the ATP site.

Belongs to the UMP kinase family. In terms of assembly, homohexamer.

It localises to the cytoplasm. It carries out the reaction UMP + ATP = UDP + ADP. It functions in the pathway pyrimidine metabolism; CTP biosynthesis via de novo pathway; UDP from UMP (UMPK route): step 1/1. Inhibited by UTP. Catalyzes the reversible phosphorylation of UMP to UDP. This Prochlorococcus marinus (strain AS9601) protein is Uridylate kinase.